The sequence spans 141 residues: VLSGTDKTNVKGIFSKISSHAEEYGAETLERMFITYPQTKTYFPHFDLHHGSAQIKAHGKKVANALIEAVNHIDDISGALSKLSDLHAQKLRVDPVNFKLLGQCFLVVVAIHHPSALTPEVHASLDKFLCAVGAVLTAKYR.

A Globin domain is found at 1 to 141 (VLSGTDKTNV…VGAVLTAKYR (141 aa)). Residue H58 participates in O2 binding. H87 contributes to the heme b binding site.

It belongs to the globin family. As to quaternary structure, heterotetramer of two alpha chains and two beta chains. As to expression, red blood cells.

In terms of biological role, involved in oxygen transport from the lung to the various peripheral tissues. The chain is Hemoglobin subunit alpha-A (HBAA) from Struthio camelus (Common ostrich).